Here is a 61-residue protein sequence, read N- to C-terminus: Arabinogalactan protein 15 (61 aa).

Positions 1-22 are cleaved as a signal peptide; it reads MAISKASIVVLMMVIISVVASA. Gln-23 carries the pyrrolidone carboxylic acid modification. 3 positions are modified to 4-hydroxyproline: Pro-27, Pro-29, and Pro-31. O-linked (Ara...) hydroxyproline glycans are attached at residues Pro-27, Pro-29, and Pro-31. The GPI-anchor amidated serine moiety is linked to residue Ser-35. The propeptide at 36 to 61 is removed in mature form; that stretch reads SAISASFVSAGVAAVAALVFGSALRI.

The protein belongs to the AG-peptide AGP family. Contains 4-hydroxyproline; hydroxylated on Pro-27, Pro-29 and Pro-31. Post-translationally, O-glycosylated on hydroxyprolines; noncontiguous hydroxylproline residues are glycosylated with arabinogalactan. As to expression, expressed in reproductive tissues. Expressed in chalaza, funiculus, stigma, septum, style, integument and transmitting tract.

Its subcellular location is the cell membrane. In terms of biological role, proteoglycan that seems to be implicated in diverse developmental roles such as differentiation, cell-cell recognition, embryogenesis and programmed cell death. The protein is Arabinogalactan protein 15 of Arabidopsis thaliana (Mouse-ear cress).